A 525-amino-acid polypeptide reads, in one-letter code: Apolipoprotein N-acyltransferase 2 (525 aa).

Helical transmembrane passes span 25–45 (ILNF…YYAL), 56–76 (FLYG…LAFF), 81–101 (IFTL…FGFL), 115–135 (FFFA…FLAY), 153–173 (FVDI…AACL), and 200–220 (LIFT…ILSI). In terms of domain architecture, CN hydrolase spans 228–486 (LNTVIVQQNT…AESVYTEVPV (259 aa)). E274 (proton acceptor) is an active-site residue. Residue K339 is part of the active site. C397 acts as the Nucleophile in catalysis. The chain crosses the membrane as a helical span at residues 495–515 (ASYKDWLPIMMFLILIFNIFL).

It belongs to the CN hydrolase family. Apolipoprotein N-acyltransferase subfamily.

Its subcellular location is the cell inner membrane. It catalyses the reaction N-terminal S-1,2-diacyl-sn-glyceryl-L-cysteinyl-[lipoprotein] + a glycerophospholipid = N-acyl-S-1,2-diacyl-sn-glyceryl-L-cysteinyl-[lipoprotein] + a 2-acyl-sn-glycero-3-phospholipid + H(+). It functions in the pathway protein modification; lipoprotein biosynthesis (N-acyl transfer). Functionally, catalyzes the phospholipid dependent N-acylation of the N-terminal cysteine of apolipoprotein, the last step in lipoprotein maturation. The protein is Apolipoprotein N-acyltransferase 2 of Treponema denticola (strain ATCC 35405 / DSM 14222 / CIP 103919 / JCM 8153 / KCTC 15104).